Here is a 1141-residue protein sequence, read N- to C-terminus: Envelopment polyprotein (1141 aa).

Positions 1–19 are cleaved as a signal peptide; sequence MFCLCLSLLGLLLCWPAAT. At 20 to 489 the chain is on the lumenal side; the sequence is RNLLELKVEC…CVPGLHGWAT (470 aa). Intrachain disulfides connect Cys-29–Cys-154, Cys-63–Cys-160, Cys-112–Cys-131, Cys-136–Cys-141, Cys-178–Cys-188, and Cys-213–Cys-252. An N-linked (GlcNAc...) asparagine; by host glycan is attached at Asn-137. N-linked (GlcNAc...) asparagine; by host glycosylation occurs at Asn-352. Disulfide bonds link Cys-381–Cys-440, Cys-385–Cys-394, Cys-410–Cys-429, and Cys-457–Cys-480. Residue Asn-404 is glycosylated (N-linked (GlcNAc...) asparagine; by host). The chain crosses the membrane as a helical span at residues 490-510; that stretch reads ISLLITFCFGWLAIPLLSMII. Over 511-632 the chain is Cytoplasmic; that stretch reads IRFLLIFTYL…LSMFRYKSKC (122 aa). The interval 521–538 is binding to the ribonucleoprotein; that stretch reads CSKYSTDSKFKLIIEKVK. 2 CCHC-type zinc fingers span residues 550–570 and 575–596; these read CEVCQQGCETAKELESHKKSC and CPYCLNPTEATESALQAHFKVC. Binding to the ribonucleoprotein regions lie at residues 593–610, 597–608, and 616–630; these read FKVCKLTTRFQENLKKSL, KLTTRFQENLKK, and KRGLYRTLSMFRYKS. The tract at residues 612–653 is inhibition of interferon induction; the sequence is TYEPKRGLYRTLSMFRYKSKCYVGLVWCILLTMELIVWAASA. The ITAM domain maps to 616-639; that stretch reads KRGLYRTLSMFRYKSKCYVGLVWC. Residues Tyr-620 and Tyr-633 each carry the phosphotyrosine modification. The short motif at 620-623 is the YxxL element; it reads YRTL. Residues 633–653 traverse the membrane as a helical segment; that stretch reads YVGLVWCILLTMELIVWAASA. Residues 654-1109 are Lumenal-facing; sequence ETINLEPGWT…EWLLGILSGN (456 aa). 8 disulfides stabilise this stretch: Cys-740–Cys-775, Cys-744–Cys-782, Cys-756–Cys-889, Cys-770–Cys-900, Cys-785–Cys-908, Cys-811–Cys-820, Cys-828–Cys-837, and Cys-868–Cys-872. The interval 762–782 is fusion loop; sequence FEFETGWGCNPPDCPGVGTGC. Residue Asn-932 is glycosylated (N-linked (GlcNAc...) asparagine; by host). 5 cysteine pairs are disulfide-bonded: Cys-974/Cys-1004, Cys-997/Cys-1049, Cys-1014/Cys-1019, Cys-1050/Cys-1055, and Cys-1089/Cys-1093. The helical transmembrane segment at 1110–1130 threads the bilayer; that stretch reads WMVVAVLIALFIFSLLLFSLC. The binding to the ribonucleoprotein stretch occupies residues 1126 to 1141; that stretch reads LFSLCCPRRQNYKKNK. Over 1131–1141 the chain is Cytoplasmic; the sequence is CPRRQNYKKNK.

The protein belongs to the hantavirus envelope glycoprotein family. Homodimer. Homotetramer; forms heterotetrameric Gn-Gc spikes in the pre-fusion conformation. Interacts (via C-terminus) with the nucleoprotein. Interacts with host TUFM; this interaction contributes to the virus-induced degradation of mitochondria by autophagy, which leads to degradation of host MAVS and inhibition of type I interferon (IFN) responses. Interacts with host MAP1LC3B; this interaction contributes to the virus-induced degradation of mitochondria by autophagy, which leads to degradation of host MAVS and inhibition of type I interferon (IFN) responses. In terms of assembly, homodimer. Homotetramer; forms heterotetrameric Gn-Gc spikes in the pre-fusion conformation. Homotrimer; forms homotrimer in the post-fusion conformation at acidic pH. Interacts (via C-terminus) with the nucleoprotein. In terms of processing, envelope polyprotein precursor is quickly cleaved in vivo just after synthesis, presumably by host signal peptidase.

The protein localises to the virion membrane. Its subcellular location is the host cell surface. It localises to the host Golgi apparatus membrane. It is found in the host endoplasmic reticulum membrane. The protein resides in the host mitochondrion. Forms homotetramers with glycoprotein C at the surface of the virion. Attaches the virion to host cell receptors including integrin alpha5/ITGB1. This attachment induces virion internalization predominantly through clathrin-dependent endocytosis. Mediates the assembly and budding of infectious virus particles through its interaction with the nucleocapsid protein and the viral genome. May dysregulate normal immune and endothelial cell responses through an ITAM motif. Translocates to mitochondria, binds to host TUFM and recruits MAP1LC3B. These interactions induce mitochondrial autophagy and therefore destruction of host MAVS leading to inhibition of type I interferon (IFN) responses. Concomitant breakdown of glycoprotein N is apparently prevented by the nucleoprotein that may inhibit Gn-stimulated autophagosome-lysosome fusion. Interacts with the viral genomic RNA. Inhibits the host RIG-I/TBK1 pathway by disrupting the formation of TBK1-TRAF3 complexes and downstream signaling responses required for IFN-beta transcription. In terms of biological role, forms homotetramers with glycoprotein N at the surface of the virion. Attaches the virion to host cell receptors including integrin ITGAV/ITGB3. This attachment induces virion internalization predominantly through clathrin-dependent endocytosis. Class II fusion protein that promotes fusion of viral membrane with host endosomal membrane after endocytosis of the virion. In Tula orthohantavirus (TULV), this protein is Envelopment polyprotein (GP).